We begin with the raw amino-acid sequence, 75 residues long: Metallothionein-like protein 1 (75 aa).

This sequence belongs to the metallothionein superfamily. Type 15 family.

In terms of biological role, metallothioneins have a high content of cysteine residues that bind various heavy metals. The chain is Metallothionein-like protein 1 (MTA) from Pisum sativum (Garden pea).